Reading from the N-terminus, the 610-residue chain is MPRIISRSPKMPQSRYTAGVPADGKISPGVIRVIVKTPGNQIIFTVADDTLVRQFKEILSAHFKCQMEQLVLVFMGRLLKDHDTLSQRGITDGHIIHVVIKSKHGPRSLAHSFRNLVTNNPCHQDRNPKGNSSMVCQSAGMNETKVESSLLMEPEAPKVGTESPEVGSLEHIAQVLENLCVQSLLSNMDFVHQMPPEQPYMEELIQQNPEVSHLLDNSEILCQTLELVRHLAIIQEIMQIQQPAQNPEYPPNSQPFLGLETVPNGNNHLGQSYVNNNDHMLNGVPDLLEGNCFTALLDEQVLEQVQTPSLSQPLPQEQWDQLSSSQVIYANSCGLSSITPTNATPNHTNNVSRENPAIVATQGQSNVCAVQQPAEIPVLPTISINQKPQVDKDTTITLGISDQWLEEDLQQSDDQTSSQITGGMIQLLRNHPQMAAQMLLLMNTSQLNEQWRQETPTPLQSSQLHDLLLALANPKTSQALLQIEHGLQLLATEAPALLPYIEPYLWGLGWLIPSICSYPDIVPWTWNVQDMAEPQCPESCHKSETVLQKVQPPSGDPSHSLQAPEVRFSKEMECLQAMGFVNYNANLQALIATDGDTNAAIYKLKSSQGF.

One can recognise a Ubiquitin-like domain in the interval 31-105; the sequence is IRVIVKTPGN…IHVVIKSKHG (75 aa). Residues 562–607 enclose the UBA domain; that stretch reads QAPEVRFSKEMECLQAMGFVNYNANLQALIATDGDTNAAIYKLKSS.

The chain is Ubiquilin-like protein (Ubqlnl) from Mus musculus (Mouse).